Here is a 365-residue protein sequence, read N- to C-terminus: Probable galacturonosyltransferase-like 10 (365 aa).

Residues 1–10 (MMSGSRLASR) are Cytoplasmic-facing. A helical; Signal-anchor for type II membrane protein membrane pass occupies residues 11-31 (LIIIFSIISTSFFTVESIRLF). The Lumenal segment spans residues 32 to 365 (PDSFDDASSD…LQYNQELEIL (334 aa)). N-linked (GlcNAc...) asparagine glycosylation occurs at asparagine 209.

It belongs to the glycosyltransferase 8 family.

The protein resides in the golgi apparatus membrane. It participates in glycan metabolism; pectin biosynthesis. Functionally, may be involved in pectin and/or xylans biosynthesis in cell walls. The sequence is that of Probable galacturonosyltransferase-like 10 (GATL10) from Arabidopsis thaliana (Mouse-ear cress).